A 111-amino-acid chain; its full sequence is Nucleoid-associated protein Cag_1190 (111 aa).

The protein belongs to the YbaB/EbfC family. As to quaternary structure, homodimer.

It is found in the cytoplasm. Its subcellular location is the nucleoid. Binds to DNA and alters its conformation. May be involved in regulation of gene expression, nucleoid organization and DNA protection. In Chlorobium chlorochromatii (strain CaD3), this protein is Nucleoid-associated protein Cag_1190.